The chain runs to 270 residues: Acyl-[acyl-carrier-protein]--UDP-N-acetylglucosamine O-acyltransferase (270 aa).

The protein belongs to the transferase hexapeptide repeat family. LpxA subfamily. In terms of assembly, homotrimer.

It localises to the cytoplasm. The catalysed reaction is a (3R)-hydroxyacyl-[ACP] + UDP-N-acetyl-alpha-D-glucosamine = a UDP-3-O-[(3R)-3-hydroxyacyl]-N-acetyl-alpha-D-glucosamine + holo-[ACP]. It functions in the pathway glycolipid biosynthesis; lipid IV(A) biosynthesis; lipid IV(A) from (3R)-3-hydroxytetradecanoyl-[acyl-carrier-protein] and UDP-N-acetyl-alpha-D-glucosamine: step 1/6. In terms of biological role, involved in the biosynthesis of lipid A, a phosphorylated glycolipid that anchors the lipopolysaccharide to the outer membrane of the cell. The chain is Acyl-[acyl-carrier-protein]--UDP-N-acetylglucosamine O-acyltransferase from Helicobacter pylori (strain P12).